The primary structure comprises 367 residues: Alginate lyase (367 aa).

An N-terminal signal peptide occupies residues 1–27 (MKTSHLIRITLPGALAAALLASQVSQA). Substrate contacts are provided by residues 65–66 (SK), 138–139 (HT), and tyrosine 256.

Belongs to the polysaccharide lyase 5 family.

Its subcellular location is the periplasm. It catalyses the reaction Eliminative cleavage of alginate to give oligosaccharides with 4-deoxy-alpha-L-erythro-hex-4-enuronosyl groups at their non-reducing ends and beta-D-mannuronate at their reducing end.. Catalyzes the depolymerization of alginate by cleaving the beta-1,4 glycosidic bond between two adjacent sugar residues via a beta-elimination mechanism. May serve to degrade mislocalized alginate that is trapped in the periplasmic space. This Pseudomonas paraeruginosa (strain DSM 24068 / PA7) (Pseudomonas aeruginosa (strain PA7)) protein is Alginate lyase.